The following is a 353-amino-acid chain: Lactosylceramide 4-alpha-galactosyltransferase (353 aa).

Topologically, residues 1 to 22 (MSKPPDLLLRLLRGAPRQRVCT) are cytoplasmic. The helical; Signal-anchor for type II membrane protein transmembrane segment at 23-43 (LFIIGFKFTFFVSIMIYWHVV) threads the bilayer. The Lumenal portion of the chain corresponds to 44 to 353 (GEPKEKGQLY…TTHEAMKMYL (310 aa)). The N-linked (GlcNAc...) asparagine glycan is linked to N121. The short motif at 192-194 (DTD) is the DXD motif element. N203 is a glycosylation site (N-linked (GlcNAc...) asparagine).

This sequence belongs to the glycosyltransferase 32 family. Ubiquitous. Highly expressed in kidney, heart, spleen, liver, testis and placenta.

It is found in the golgi apparatus membrane. The catalysed reaction is a beta-D-Gal-(1-&gt;4)-beta-D-Glc-(1&lt;-&gt;1)-Cer(d18:1(4E)) + UDP-alpha-D-galactose = a globoside Gb3Cer (d18:1(4E)) + UDP + H(+). It carries out the reaction a beta-D-Gal-(1&lt;-&gt;1')-ceramide + UDP-alpha-D-galactose = alpha-D-Gal-(1-&gt;4)-beta-D-Gal-(1&lt;-&gt;1')-Cer + UDP + H(+). Its pathway is glycolipid biosynthesis. Its function is as follows. Catalyzes the transfer of galactose from UDP-alpha-D-galactose to lactosylceramide/beta-D-galactosyl-(1-&gt;4)-beta-D-glucosyl-(1&lt;-&gt;1)-ceramide(d18:1(4E)) to produce globotriaosylceramide/globoside Gb3Cer (d18:1(4E)). Also able to transfer galactose to galactosylceramide/beta-D-Gal-(1&lt;-&gt;1')-Cer. Globoside Gb3Cer is a glycosphingolipid of the globo serie, one of the major types of neutral root structures of glycosphingolipids, that constitute a significant portion of mammalian cell membranes. Globotriaosylceramide/globoside Gb3Cer in blood and tissue cell membranes is the antigen Pk of blood histogroup P. In terms of biological role, (Microbial infection) Globotriaosylceramide is one of the cellular ligands for bacterial verotoxins. The sequence is that of Lactosylceramide 4-alpha-galactosyltransferase (A4GALT) from Homo sapiens (Human).